The chain runs to 503 residues: D-alanine--D-alanyl carrier protein ligase (503 aa).

Position 151–152 (151–152 (TS)) interacts with ATP. D196 is a D-alanine binding site. ATP is bound at residue 291-296 (NTYGPT). V300 is a D-alanine binding site. Positions 382 and 491 each coordinate ATP. A D-alanine-binding site is contributed by K491.

Belongs to the ATP-dependent AMP-binding enzyme family. DltA subfamily.

The protein resides in the cytoplasm. The catalysed reaction is holo-[D-alanyl-carrier protein] + D-alanine + ATP = D-alanyl-[D-alanyl-carrier protein] + AMP + diphosphate. The protein operates within cell wall biogenesis; lipoteichoic acid biosynthesis. In terms of biological role, catalyzes the first step in the D-alanylation of lipoteichoic acid (LTA), the activation of D-alanine and its transfer onto the D-alanyl carrier protein (Dcp) DltC. In an ATP-dependent two-step reaction, forms a high energy D-alanyl-AMP intermediate, followed by transfer of the D-alanyl residue as a thiol ester to the phosphopantheinyl prosthetic group of the Dcp. D-alanylation of LTA plays an important role in modulating the properties of the cell wall in Gram-positive bacteria, influencing the net charge of the cell wall. The protein is D-alanine--D-alanyl carrier protein ligase of Bacillus velezensis (strain DSM 23117 / BGSC 10A6 / LMG 26770 / FZB42) (Bacillus amyloliquefaciens subsp. plantarum).